A 1007-amino-acid chain; its full sequence is Beta-galactosidase (1007 aa).

The segment at 29 to 48 (TIPPHSDHESFQSQEELEEG) is disordered. Glu-465 serves as the catalytic Proton donor. Glu-532 functions as the Nucleophile in the catalytic mechanism.

This sequence belongs to the glycosyl hydrolase 2 family. As to quaternary structure, monomer.

It carries out the reaction Hydrolysis of terminal non-reducing beta-D-galactose residues in beta-D-galactosides.. This is Beta-galactosidase (lacZ) from Lactobacillus delbrueckii subsp. bulgaricus.